Consider the following 149-residue polypeptide: Large ribosomal subunit protein bL9 (149 aa).

Belongs to the bacterial ribosomal protein bL9 family.

In terms of biological role, binds to the 23S rRNA. This is Large ribosomal subunit protein bL9 from Xanthomonas oryzae pv. oryzae (strain MAFF 311018).